Consider the following 138-residue polypeptide: Small ribosomal subunit protein uS12 (138 aa).

The segment at 1-20 is disordered; it reads MPTISQLINHGRSAKTSKSK. Residue Asp102 is modified to 3-methylthioaspartic acid. The disordered stretch occupies residues 116 to 138; sequence DAAGVDKRKQGRSIYGTKKPKEN.

It belongs to the universal ribosomal protein uS12 family. As to quaternary structure, part of the 30S ribosomal subunit. Contacts proteins S8 and S17. May interact with IF1 in the 30S initiation complex.

In terms of biological role, with S4 and S5 plays an important role in translational accuracy. Its function is as follows. Interacts with and stabilizes bases of the 16S rRNA that are involved in tRNA selection in the A site and with the mRNA backbone. Located at the interface of the 30S and 50S subunits, it traverses the body of the 30S subunit contacting proteins on the other side and probably holding the rRNA structure together. The combined cluster of proteins S8, S12 and S17 appears to hold together the shoulder and platform of the 30S subunit. This is Small ribosomal subunit protein uS12 from Metamycoplasma arthritidis (strain 158L3-1) (Mycoplasma arthritidis).